Here is a 101-residue protein sequence, read N- to C-terminus: Small ribosomal subunit protein uS14 (101 aa).

The segment covering 1-10 (MAKKSSIEKN) has biased composition (basic and acidic residues). Positions 1-25 (MAKKSSIEKNNRRKKMAKNAAPKRE) are disordered.

This sequence belongs to the universal ribosomal protein uS14 family. As to quaternary structure, part of the 30S ribosomal subunit. Contacts proteins S3 and S10.

Its function is as follows. Binds 16S rRNA, required for the assembly of 30S particles and may also be responsible for determining the conformation of the 16S rRNA at the A site. This Rhodopseudomonas palustris (strain BisA53) protein is Small ribosomal subunit protein uS14.